The following is a 443-amino-acid chain: MTHIQLDFSKTLEFFGEHELKQQQEIVKSIHKTIHEGTGAGSDFLGWIDLPVDYDKEEFSRIVEASKRIKENSDVLVVIGIGGSYLGARAAIEMLTSSFRNSNEYPEIVFVGNHLSSTYTKELVDYLADKDFSVNVISKSGTTTEPAVAFRLFKQLVEERYGKEEAQKRIFATTDKEKGALKQLATNEGYETFIVPDDVGGRYSVLTAVGLLPIATAGINIEAMMIGAAKAREELSSDKLEENIAYQYATIRNILYAKGYTTEMLINYEPSMQYFNEWWKQLFGESEGKDFKGIYPSSANYTTDLHSLGQYVQEGRRFLFETVVKVNHPKYDITIEKDSDDLDGLNYLAGKTIDEVNTKAFEGTLLAHTDGGVPNMVVNIPQLDEETFGYVVYFFELACAMSGYQLGVNPFNQPGVEAYKQNMFALLGKPGFEDLKKELEERL.

Glu285 acts as the Proton donor in catalysis. Catalysis depends on residues His306 and Lys420.

It belongs to the GPI family.

It is found in the cytoplasm. It catalyses the reaction alpha-D-glucose 6-phosphate = beta-D-fructose 6-phosphate. It participates in carbohydrate biosynthesis; gluconeogenesis. The protein operates within carbohydrate degradation; glycolysis; D-glyceraldehyde 3-phosphate and glycerone phosphate from D-glucose: step 2/4. Catalyzes the reversible isomerization of glucose-6-phosphate to fructose-6-phosphate. In Staphylococcus aureus (strain NCTC 8325 / PS 47), this protein is Glucose-6-phosphate isomerase.